A 646-amino-acid polypeptide reads, in one-letter code: Calcium-dependent protein kinase 2 (646 aa).

Glycine 2 carries N-myristoyl glycine lipidation. Cysteine 5 carries the S-palmitoyl cysteine lipid modification. The interval arginine 27–leucine 169 is disordered. Positions glutamine 32 to valine 43 are enriched in polar residues. Composition is skewed to basic and acidic residues over residues proline 73–valine 119 and alanine 126–lysine 157. The region spanning tyrosine 186–valine 444 is the Protein kinase domain. ATP contacts are provided by residues leucine 192–threonine 200 and lysine 215. Aspartate 310 acts as the Proton acceptor in catalysis. The residue at position 350 (serine 350) is a Phosphoserine. Positions alanine 450–isoleucine 480 are autoinhibitory domain. 4 EF-hand domains span residues glutamate 487–asparagine 522, leucine 523–isoleucine 558, glutamate 559–glycine 592, and valine 593–methionine 628. Ca(2+) is bound by residues aspartate 500, aspartate 502, serine 504, glutamine 506, glutamate 511, aspartate 536, aspartate 538, serine 540, threonine 542, glutamate 547, aspartate 572, aspartate 574, serine 576, glutamate 583, aspartate 606, aspartate 608, aspartate 610, arginine 612, and glutamate 617.

The protein belongs to the protein kinase superfamily. Ser/Thr protein kinase family. CDPK subfamily. Interacts with 14-3-3 proteins.

Its subcellular location is the endoplasmic reticulum membrane. The catalysed reaction is L-seryl-[protein] + ATP = O-phospho-L-seryl-[protein] + ADP + H(+). It carries out the reaction L-threonyl-[protein] + ATP = O-phospho-L-threonyl-[protein] + ADP + H(+). With respect to regulation, activated by calcium. Autophosphorylation may play an important role in the regulation of the kinase activity. Functionally, may play a role in signal transduction pathways that involve calcium as a second messenger. In Arabidopsis thaliana (Mouse-ear cress), this protein is Calcium-dependent protein kinase 2 (CPK2).